We begin with the raw amino-acid sequence, 300 residues long: uncharacterized protein (300 aa).

The a divalent metal cation site is built by Glu146, Glu148, and Asp177.

The protein belongs to the FAH family.

This is an uncharacterized protein from Staphylococcus aureus (strain MW2).